Consider the following 273-residue polypeptide: 5-deoxy-glucuronate isomerase (273 aa).

The protein belongs to the isomerase IolB family.

The enzyme catalyses 5-deoxy-D-glucuronate = 5-dehydro-2-deoxy-D-gluconate. It participates in polyol metabolism; myo-inositol degradation into acetyl-CoA; acetyl-CoA from myo-inositol: step 4/7. Involved in the isomerization of 5-deoxy-glucuronate (5DG) to 5-dehydro-2-deoxy-D-gluconate (DKG or 2-deoxy-5-keto-D-gluconate). The chain is 5-deoxy-glucuronate isomerase from Listeria monocytogenes serotype 4a (strain HCC23).